A 252-amino-acid polypeptide reads, in one-letter code: Transmembrane ascorbate-dependent reductase CYB561 (252 aa).

At M1 the chain carries N-acetylmethionine. Over M1–Y17 the chain is Cytoplasmic. Residues V18–M38 form a helical membrane-spanning segment. The Cytochrome b561 domain occupies F20–T221. The Vesicular segment spans residues Y39–N52. The helical transmembrane segment at V53 to Y73 threads the bilayer. Heme b is bound by residues H54, R74, and K81. Residues R74–V86 lie on the Cytoplasmic side of the membrane. 2 residues coordinate L-ascorbate: K81 and K85. The chain crosses the membrane as a helical span at residues L87–F107. Heme b is bound by residues H88, D117–S120, and H122. The Vesicular segment spans residues E108–C125. A helical membrane pass occupies residues G126–F146. Residues P147–P159 are Cytoplasmic-facing. L-ascorbate is bound at residue R154. Residues Q160 to L180 traverse the membrane as a helical segment. 2 residues coordinate heme b: H161 and E182. Residues K181–G199 lie on the Vesicular side of the membrane. Residues V200–L220 form a helical membrane-spanning segment. The Cytoplasmic segment spans residues T221–Q252. K226 lines the heme b pocket. Residues S248 and S250 each carry the phosphoserine modification.

Heme b is required as a cofactor.

It localises to the cytoplasmic vesicle. Its subcellular location is the secretory vesicle. The protein resides in the chromaffin granule membrane. It catalyses the reaction monodehydro-L-ascorbate radical(out) + L-ascorbate(in) = monodehydro-L-ascorbate radical(in) + L-ascorbate(out). Functionally, transmembrane reductase that uses ascorbate as an electron donor in the cytoplasm and transfers electrons across membranes to reduce monodehydro-L-ascorbate radical in the lumen of secretory vesicles. It is therefore involved the regeneration and homeostasis within secretory vesicles of ascorbate which in turn provides reducing equivalents needed to support the activity of intravesicular enzymes. The sequence is that of Transmembrane ascorbate-dependent reductase CYB561 (CYB561) from Ovis aries (Sheep).